The sequence spans 562 residues: Zinc finger protein 579 (562 aa).

The segment covering 1-11 has biased composition (pro residues); the sequence is MDPQPPPPAQG. Residues 1–43 are disordered; that stretch reads MDPQPPPPAQGSPPHRGRGRGRGRGRGRGRGRGRGGAGAPRAP. A compositionally biased stretch (basic residues) spans 15 to 33; that stretch reads HRGRGRGRGRGRGRGRGRG. 3 consecutive C2H2-type zinc fingers follow at residues 44–66, 72–94, and 100–123; these read LPCP…RLSH, HACP…LRGH, and LRCA…AQEH. Arginine 92 is modified (omega-N-methylarginine). Residues 139-203 are disordered; it reads TAEPSWGPQD…SESEEAEAGA (65 aa). A phosphoserine mark is found at serine 194 and serine 196. 2 consecutive C2H2-type zinc fingers follow at residues 270-292 and 298-320; these read HQCS…RLVH and FVCP…RRVH. The interval 327–379 is disordered; it reads APLPAAGKKDDKASGARNSAKGPEGGEGAECGGASEGGEGQNGGDAAPARPPA. The segment covering 349 to 369 has biased composition (gly residues); the sequence is PEGGEGAECGGASEGGEGQNG. C2H2-type zinc fingers lie at residues 384–406, 412–434, and 441–463; these read FWCP…GVTH, FQCV…AQVH, and HPCP…QRCH. The interval 477–562 is disordered; sequence QAQAPTSPPP…HLRGLGGLAS (86 aa). Pro residues-rich tracts occupy residues 482-491 and 512-525; these read TSPPPPPPPL and PSPG…PAPP. At serine 483 the chain carries Phosphoserine.

The protein belongs to the krueppel C2H2-type zinc-finger protein family.

Its subcellular location is the nucleus. Functionally, may be involved in transcriptional regulation. The chain is Zinc finger protein 579 (ZNF579) from Homo sapiens (Human).